Reading from the N-terminus, the 932-residue chain is AP-3 complex subunit delta (932 aa).

At Thr-2 the chain carries N-acetylthreonine. HEAT repeat units follow at residues 157-194 (SLAR…QYPE), 196-231 (LRDN…KNPQ), 233-269 (FIQL…VEPK), 270-307 (LRAK…LEED), 310-346 (ETAM…KINT), 347-384 (DFIS…EDNL), 386-425 (AIVQ…ENYK), 427-466 (KMVN…DISD), 490-527 (VTIA…TLVE), 528-564 (NGND…NWCN), 570-601 (KRFE…ERSV), and 602-638 (EVLE…AYEL). Phosphoserine occurs at positions 700 and 727. The interval 720 to 868 (EREKERMSNP…EEGNLRKEDE (149 aa)) is disordered. 2 stretches are compositionally biased toward basic and acidic residues: residues 738–747 (ERTKNSKDLL) and 755–766 (SDKKPETIRLNR). Position 767 is a phosphothreonine (Thr-767). Over residues 767–779 (TDNSLNSLSLSTT) the composition is skewed to low complexity. A phosphoserine mark is found at Ser-770 and Ser-773. Basic residues predominate over residues 783–793 (RKKKKGKKKNR). Phosphoserine is present on Ser-798. A compositionally biased stretch (basic and acidic residues) spans 806-832 (APKRKDAFQKPHDNHSTQNPLKKDKIN). Polar residues predominate over residues 838 to 855 (QLENFDFSNFGQSSNAGR). Residues 857–868 (SQEEGNLRKEDE) show a composition bias toward basic and acidic residues. Residues 858–878 (QEEGNLRKEDELELSRLEANL) are a coiled coil. Ser-888 is modified (phosphoserine). Positions 897-915 (KKKKKGKKSKSKNKLKTKA) are enriched in basic residues. A disordered region spans residues 897 to 932 (KKKKKGKKSKSKNKLKTKAKNSPEPNEFLRDQSTDI). Ser-918 bears the Phosphoserine mark. Over residues 923–932 (EFLRDQSTDI) the composition is skewed to basic and acidic residues.

The protein belongs to the adaptor complexes large subunit family. In terms of assembly, adaptor protein complex 3 (AP-3) is a heterotetramer composed of 2 large adaptins (APL5 and APL6), a medium adaptin (APM3) and a small adaptin (APS3). Interacts with VPS41.

It is found in the golgi apparatus. The protein resides in the cytoplasmic vesicle. It localises to the clathrin-coated vesicle membrane. Functionally, part of the AP-3 complex, an adaptor-related complex which is not clathrin-associated. The complex is associated with the Golgi region as well as more peripheral structures. It facilitates the budding of vesicles from the Golgi membrane and may be directly involved in trafficking to the vacuole. Required for the transport via the ALP pathway, which directs the transport of the cargo proteins PHO8 and VAM3 to the vacuole. This chain is AP-3 complex subunit delta (APL5), found in Saccharomyces cerevisiae (strain ATCC 204508 / S288c) (Baker's yeast).